A 728-amino-acid chain; its full sequence is Polyribonucleotide nucleotidyltransferase (728 aa).

Mg(2+)-binding residues include Asp-509 and Asp-515. A KH domain is found at 576–638; it reads TKIYTFYIPK…TKLKIAILKI (63 aa). Residues 648–715 enclose the S1 motif domain; it reads GTIYKAKVKN…KFRKIKLSHK (68 aa).

This sequence belongs to the polyribonucleotide nucleotidyltransferase family. Mg(2+) serves as cofactor.

The protein localises to the cytoplasm. It catalyses the reaction RNA(n+1) + phosphate = RNA(n) + a ribonucleoside 5'-diphosphate. Involved in mRNA degradation. Catalyzes the phosphorolysis of single-stranded polyribonucleotides processively in the 3'- to 5'-direction. This Karelsulcia muelleri (strain GWSS) (Sulcia muelleri) protein is Polyribonucleotide nucleotidyltransferase.